A 32-amino-acid polypeptide reads, in one-letter code: Cytochrome b6-f complex subunit 7 (32 aa).

The chain crosses the membrane as a helical span at residues A9–L27.

The protein belongs to the PetM family. As to quaternary structure, the 4 large subunits of the cytochrome b6-f complex are cytochrome b6, subunit IV (17 kDa polypeptide, PetD), cytochrome f and the Rieske protein, while the 4 small subunits are PetG, PetL, PetM and PetN. The complex functions as a dimer.

It is found in the cellular thylakoid membrane. In terms of biological role, component of the cytochrome b6-f complex, which mediates electron transfer between photosystem II (PSII) and photosystem I (PSI), cyclic electron flow around PSI, and state transitions. This is Cytochrome b6-f complex subunit 7 from Prochlorococcus marinus (strain NATL1A).